A 148-amino-acid chain; its full sequence is Macrodomain Ter protein (148 aa).

This sequence belongs to the MatP family. Homodimer.

Its subcellular location is the cytoplasm. Required for spatial organization of the terminus region of the chromosome (Ter macrodomain) during the cell cycle. Prevents early segregation of duplicated Ter macrodomains during cell division. Binds specifically to matS, which is a 13 bp signature motif repeated within the Ter macrodomain. This chain is Macrodomain Ter protein, found in Pasteurella multocida (strain Pm70).